Reading from the N-terminus, the 553-residue chain is MKWCWGPVLLIAGATVLMEGLQAAQRACGQRGPGPPKPQEGNTVPGEWPWQASVRRQGAHICSGSLVADTWVLTAAHCFEKAAATELNSWSVVLGSLQREGLSPGAEEVGVAALQLPRAYNHYSQGSDLALLQLAHPTTHTPLCLPQPAHRFPFGASCWATGWDQDTSDAPGTLRNLRLRLISRPTCNCIYNQLHQRHLSNPARPGMLCGGPQPGVQGPCQGDSGGPVLCLEPDGHWVQAGIISFASSCAQEDAPVLLTNTAAHSSWLQARVQGAAFLAQSPETPEMSDEDSCVACGSLRTAGPQAGAPSPWPWEARLMHQGQLACGGALVSEEAVLTAAHCFIGRQAPEEWSVGLGTRPEEWGLKQLILHGAYTHPEGGYDMALLLLAQPVTLGASLRPLCLPYPDHHLPDGERGWVLGRARPGAGISSLQTVPVTLLGPRACSRLHAAPGGDGSPILPGMVCTSAVGELPSCEGLSGAPLVHEVRGTWFLAGLHSFGDACQGPARPAVFTALPAYEDWVSSLDWQVYFAEEPEPEAEPGSCLANISQPTSC.

The signal sequence occupies residues 1–23 (MKWCWGPVLLIAGATVLMEGLQA). 2 consecutive Peptidase S1 domains span residues 24-273 (AQRA…ARVQ) and 294-526 (VACG…SLDW). Residues 27–46 (ACGQRGPGPPKPQEGNTVPG) form a disordered region. Cysteine 62 and cysteine 78 are joined by a disulfide. Active-site charge relay system residues include histidine 77 and aspartate 128. 4 disulfides stabilise this stretch: cysteine 158–cysteine 230, cysteine 187–cysteine 209, cysteine 220–cysteine 249, and cysteine 326–cysteine 342. Residues serine 224, histidine 341, and aspartate 382 each act as charge relay system in the active site. Intrachain disulfides connect cysteine 444/cysteine 464 and cysteine 474/cysteine 502. The active-site Charge relay system is serine 478.

Belongs to the peptidase S1 family. In terms of tissue distribution, predominantly detected in testis, liver, heart and ovary, as well as in several tumor cell lines.

It localises to the secreted. In terms of biological role, in vitro can degrade the fibrinogen alpha chain of as well as pro-urokinase-type plasminogen activator. The protein is Serine protease 53 (PRSS53) of Homo sapiens (Human).